A 158-amino-acid chain; its full sequence is Probable cyclic pyranopterin monophosphate synthase (158 aa).

Substrate contacts are provided by residues 75-77 (MCH) and 111-112 (ME). D126 is a catalytic residue.

The protein belongs to the MoaC family. As to quaternary structure, homohexamer; trimer of dimers.

It carries out the reaction (8S)-3',8-cyclo-7,8-dihydroguanosine 5'-triphosphate = cyclic pyranopterin phosphate + diphosphate. It participates in cofactor biosynthesis; molybdopterin biosynthesis. Its function is as follows. Catalyzes the conversion of (8S)-3',8-cyclo-7,8-dihydroguanosine 5'-triphosphate to cyclic pyranopterin monophosphate (cPMP). The sequence is that of Probable cyclic pyranopterin monophosphate synthase from Methanocorpusculum labreanum (strain ATCC 43576 / DSM 4855 / Z).